Consider the following 717-residue polypeptide: MTVEDNLDIDFSDLEEKYAVNADEGFESFIVVDGAPVIPQAKQAALANVMKKFFGAVGKIKEDGIFIPFDEATGKSTGFVFIEYETGEMAAAAVKSFHNKQFDKNHKLLVNKLSEVEKYGMQYDTLKTEEFVEPETEPFVEQGHLRSWLMDPQGRDQFVLHRGDTVGVFWNKKGDTLEADVDRERWTETQVYWSPTGTYLVSTHTQGVQLWGGPDWAPPICKFQHPNVKMVQFSPCEKFLVTWSNVPLVLPDDEEKRKSIPFGPADEGKQIIVWNLETRLPVRTFAMPPEKKGASMSWPILKFSPDDKYAARMIPGEQLSIYETETMSLLDKKSVKAPGIVDFEWAPALVNLEGRQKSATESVLCYWTPEIGNQTARVVLMKASNKEVLRTRNLFNVADCKIHWQDQGRFLCVKVDRHTKSKKSTFTNLEFFRLCERGVPVEVMELKDTVTNMAWEPHGDRFVTISNSDSTTNYDGPLPANRHTLSFYALERHKGTQGTWKLIKAFDKKNCNSLFWSPNGRFLITVMIEGSNSIDLDFWDMDYEGDRKHGDKDLPANLHFLGSSEHYGISALEWDPSGRFVATWSSYWRHHTENGYKIWDFRGQLQREESIDRFKHFSWRPRPPTLLSKQQKKDIRNNLEEYSRKFEEIDAMEASEASRELIMLRKRLLEEWTAWRAQTDKKLEELGLVEPEPAESEYTTIEEIKEVVVEDKEEVCE.

Residues 1–89 are sufficient for interaction with HCR1 and TIF32; that stretch reads MTVEDNLDID…VFIEYETGEM (89 aa). Residues 1–216 are sufficient for interaction with PIC8; sequence MTVEDNLDID…GVQLWGGPDW (216 aa). Positions 28-115 constitute an RRM domain; the sequence is SFIVVDGAPV…HKLLVNKLSE (88 aa). WD repeat units lie at residues 183 to 221, 223 to 284, 293 to 332, 445 to 484, 506 to 549, and 564 to 609; these read RERW…PPIC, FQHP…PVRT, GASM…LLDK, ELKD…NRHT, FDKK…DRKH, and SEHY…QREE.

The protein belongs to the eIF-3 subunit B family. As to quaternary structure, component of the eukaryotic translation initiation factor 3 (eIF-3) complex.

The protein localises to the cytoplasm. In terms of biological role, RNA-binding component of the eukaryotic translation initiation factor 3 (eIF-3) complex, which is involved in protein synthesis of a specialized repertoire of mRNAs and, together with other initiation factors, stimulates binding of mRNA and methionyl-tRNAi to the 40S ribosome. The eIF-3 complex specifically targets and initiates translation of a subset of mRNAs involved in cell proliferation. In Yarrowia lipolytica (strain CLIB 122 / E 150) (Yeast), this protein is Eukaryotic translation initiation factor 3 subunit B.